Reading from the N-terminus, the 228-residue chain is RING1 and YY1-binding protein (228 aa).

3 disordered regions span residues 1–21, 47–157, and 172–228; these read MTMGDKKSPTRPKRQAKPAAD, RKGT…STAQ, and DFKE…DESF. The RanBP2-type zinc-finger motif lies at 21-50; it reads DEGFWDCSVCTFRNSAEAFKCSICDVRKGT. The segment covering 76–98 has biased composition (basic and acidic residues); sequence PKKEKKEKVEKPDKEKPEKDKDI. Lysine 77 participates in a covalent cross-link: Glycyl lysine isopeptide (Lys-Gly) (interchain with G-Cter in SUMO2). Serine 99 carries the post-translational modification Phosphoserine. Residues 113-122 show a composition bias toward basic and acidic residues; sequence PKSDILKDPP. Phosphoserine is present on residues serine 123, serine 127, and serine 130. The span at 124-143 shows a compositional bias: polar residues; it reads EANSIQSANATTKTSETNHT. The segment at 143-226 is interaction with GABPB1 and FANK1; it reads TSRPRLKNVD…KGDMSAVNDE (84 aa). Low complexity predominate over residues 179-204; sequence SSSTSSSTVTSSAGSEQQNQSSSGSE. A Phosphoserine modification is found at serine 227.

As to quaternary structure, monomer. Component of repressive BCOR complex containing Polycomb group subcomplex at least composed of BCOR, PCGF1, RING1 and RNF2/RING2. Component of PCR1-like complexes. Interacts with PCGF1. Part of a PCR1-like complex that contains AUTS2, PCGF5, RNF2, CSNK2B and RYBP. Interacts with RNF2; the interaction is direct. Interacts with CBX2, YAF2, RING1 and RNF2. Interacts with ubiquitin and ubiquitinated proteins. Interacts with ubiquitinated histone H2A. Interacts with apoptin, DEDD, FADD, CASP8, CASP10, YY1 and GABPB1. Together with GABPB1 and YY1, it forms a ternary complex, probably being the bridge factor between these two transcription factors. Interacts with MDM2, and thereby inhibits ubiquitination of TP53. Identified in a ternary complex containing MDM2, TP53 and RYBP. Interacts with FANK1; may prevent the ubiquitin-mediated proteasomal degradation of FANK1. Interacts with IFT57. In terms of processing, monoubiquitinated. As to expression, expressed in embryonic stem cells.

It localises to the nucleus. It is found in the cytoplasm. The protein resides in the nucleoplasm. In terms of biological role, component of a Polycomb group (PcG) multiprotein PRC1-like complex, a complex class required to maintain the transcriptionally repressive state of many genes, including Hox genes, throughout development. PcG PRC1-like complex acts via chromatin remodeling and modification of histones; it mediates monoubiquitination of histone H2A 'Lys-119', rendering chromatin heritably changed in its expressibility. Component of a PRC1-like complex that mediates monoubiquitination of histone H2A 'Lys-119' on the X chromosome and is required for normal silencing of one copy of the X chromosome in XX females. May stimulate ubiquitination of histone H2A 'Lys-119' by recruiting the complex to target sites. Inhibits ubiquitination and subsequent degradation of TP53, and thereby plays a role in regulating transcription of TP53 target genes. May also regulate the ubiquitin-mediated proteasomal degradation of other proteins like FANK1 to regulate apoptosis. May be implicated in the regulation of the transcription as a repressor of the transcriptional activity of E4TF1. May bind to DNA. May play a role in the repression of tumor growth and metastasis in breast cancer by down-regulating SRRM3. The chain is RING1 and YY1-binding protein (Rybp) from Mus musculus (Mouse).